Reading from the N-terminus, the 543-residue chain is Phosphatidylinositol/phosphatidylcholine transfer protein SFH12 (543 aa).

The CRAL-TRIO domain occupies 120-294; the sequence is EIDEVLKYYP…FLGGSCTCAD (175 aa). Residues 316-356 form a disordered region; it reads HNGDHKCSKGSQAENSGEKTIPEEDDSTTEPASEEEKASKE. Residues 490-526 adopt a coiled-coil conformation; that stretch reads DKEEMLNAAISRSNVLEQELAATKKALDDSLGRQEEL.

It belongs to the SFH family. Specifically expressed in flowers.

It localises to the golgi apparatus membrane. The protein resides in the cell membrane. Required for transport of secretory proteins from the Golgi complex. Catalyzes the transfer of phosphatidylinositol and phosphatidylcholine between membranes in vitro. This Arabidopsis thaliana (Mouse-ear cress) protein is Phosphatidylinositol/phosphatidylcholine transfer protein SFH12 (SFH12).